Consider the following 398-residue polypeptide: Mitogen-activated protein kinase 1 (398 aa).

Positions 1-26 (MDAGAQPPDTEMAEAGGGQQPPAAAA) are disordered. Positions 67–352 (KPPILPIGKG…VEGALAHPYL (286 aa)) constitute a Protein kinase domain. Residues 73 to 81 (IGKGAYGIV) and K96 each bind ATP. D193 functions as the Proton acceptor in the catalytic mechanism. Residue T225 is modified to Phosphothreonine. The short motif at 225–227 (TEY) is the TXY element. At Y227 the chain carries Phosphotyrosine.

This sequence belongs to the protein kinase superfamily. CMGC Ser/Thr protein kinase family. MAP kinase subfamily. In terms of assembly, may interact with RAC1. In terms of processing, dually phosphorylated on Thr-225 and Tyr-227, which activates the enzyme.

The enzyme catalyses L-seryl-[protein] + ATP = O-phospho-L-seryl-[protein] + ADP + H(+). The catalysed reaction is L-threonyl-[protein] + ATP = O-phospho-L-threonyl-[protein] + ADP + H(+). With respect to regulation, activated by threonine and tyrosine phosphorylation. Activated in response to sphingolipid elicitor (SE). In terms of biological role, involved in sphingolipid elicitor (SE)-dependent defense signaling pathway. Acts downstream of heterotrimeric G protein alpha subunit and small GTPase RAC1. May regulate the expression of various genes involved in biotic and abiotic stress response. Involved in an abscisic acid signaling pathway that regulates the activities of antioxidant enzymes and the production of hydrogen peroxide. Acts downstream of CCAMK. The polypeptide is Mitogen-activated protein kinase 1 (MPK1) (Oryza sativa subsp. japonica (Rice)).